The sequence spans 240 residues: MKYYRNQDSYWWADADDPFLWRESLPFVRVGLAELIIMTLVSLVLAVIAGWFWWPLAVPFVLVAALVAWFFRNPRRKVPETIGTVVSPADGKLVEIVEVDDPIIGAAVRFGIFLSVFNVHANRIAMPGRVVRVRYRPGKFLNALRSESTKENENIDVELECPEIGGRIVRIRQITGQFARRIVCWARVGDVLQRGEMFGMIKLGSRTELVIPRDEALEIVAQVGEKVCAGSTVFARYQQG.

Residue serine 205 is the Schiff-base intermediate with substrate; via pyruvic acid of the active site. At serine 205 the chain carries Pyruvic acid (Ser); by autocatalysis.

This sequence belongs to the phosphatidylserine decarboxylase family. PSD-A subfamily. Heterodimer of a large membrane-associated beta subunit and a small pyruvoyl-containing alpha subunit. It depends on pyruvate as a cofactor. In terms of processing, is synthesized initially as an inactive proenzyme. Formation of the active enzyme involves a self-maturation process in which the active site pyruvoyl group is generated from an internal serine residue via an autocatalytic post-translational modification. Two non-identical subunits are generated from the proenzyme in this reaction, and the pyruvate is formed at the N-terminus of the alpha chain, which is derived from the carboxyl end of the proenzyme. The post-translation cleavage follows an unusual pathway, termed non-hydrolytic serinolysis, in which the side chain hydroxyl group of the serine supplies its oxygen atom to form the C-terminus of the beta chain, while the remainder of the serine residue undergoes an oxidative deamination to produce ammonia and the pyruvoyl prosthetic group on the alpha chain.

It localises to the cell membrane. It carries out the reaction a 1,2-diacyl-sn-glycero-3-phospho-L-serine + H(+) = a 1,2-diacyl-sn-glycero-3-phosphoethanolamine + CO2. It functions in the pathway phospholipid metabolism; phosphatidylethanolamine biosynthesis; phosphatidylethanolamine from CDP-diacylglycerol: step 2/2. Its function is as follows. Catalyzes the formation of phosphatidylethanolamine (PtdEtn) from phosphatidylserine (PtdSer). This chain is Phosphatidylserine decarboxylase proenzyme, found in Rhodopirellula baltica (strain DSM 10527 / NCIMB 13988 / SH1).